The primary structure comprises 339 residues: Anthranilate phosphoribosyltransferase (339 aa).

Residues G81, 84–85 (GD), S89, 91–94 (NVSS), 109–117 (KHGNRALSS), and A121 contribute to the 5-phospho-alpha-D-ribose 1-diphosphate site. Position 81 (G81) interacts with anthranilate. S93 provides a ligand contact to Mg(2+). N112 contacts anthranilate. R167 is an anthranilate binding site. Residues D225 and E226 each contribute to the Mg(2+) site.

Belongs to the anthranilate phosphoribosyltransferase family. In terms of assembly, homodimer. Requires Mg(2+) as cofactor.

It catalyses the reaction N-(5-phospho-beta-D-ribosyl)anthranilate + diphosphate = 5-phospho-alpha-D-ribose 1-diphosphate + anthranilate. It functions in the pathway amino-acid biosynthesis; L-tryptophan biosynthesis; L-tryptophan from chorismate: step 2/5. Functionally, catalyzes the transfer of the phosphoribosyl group of 5-phosphorylribose-1-pyrophosphate (PRPP) to anthranilate to yield N-(5'-phosphoribosyl)-anthranilate (PRA). The polypeptide is Anthranilate phosphoribosyltransferase (Brucella canis (strain ATCC 23365 / NCTC 10854 / RM-666)).